A 139-amino-acid polypeptide reads, in one-letter code: Large-conductance mechanosensitive channel (139 aa).

The next 2 helical transmembrane spans lie at 14–34 (VVDMAVGIIIGAAFGAIVKSL) and 86–106 (GLFINAVVSFTIVAFAVFLLI).

It belongs to the MscL family. Homopentamer.

It localises to the cell inner membrane. In terms of biological role, channel that opens in response to stretch forces in the membrane lipid bilayer. May participate in the regulation of osmotic pressure changes within the cell. The polypeptide is Large-conductance mechanosensitive channel (Methylobacillus flagellatus (strain ATCC 51484 / DSM 6875 / VKM B-1610 / KT)).